The chain runs to 703 residues: 1,4-alpha-glucan-branching enzyme (703 aa).

W93 and K130 together coordinate (1,4-alpha-D-glucosyl)n. Catalysis depends on D355, which acts as the Nucleophile. The active-site Proton donor is E415.

It belongs to the glycosyl hydrolase 13 family. GlgB subfamily.

The protein resides in the cytoplasm. It carries out the reaction Transfers a segment of a (1-&gt;4)-alpha-D-glucan chain to a primary hydroxy group in a similar glucan chain.. It functions in the pathway glycan biosynthesis; glycogen biosynthesis. Its function is as follows. Glycogen-branching enzyme participates in the glycogen biosynthetic process along with glycogenin and glycogen synthase. Generates alpha-1,6-glucosidic branches from alpha-1,4-linked glucose chains, to increase solubility of the glycogen polymer. This Eremothecium gossypii (strain ATCC 10895 / CBS 109.51 / FGSC 9923 / NRRL Y-1056) (Yeast) protein is 1,4-alpha-glucan-branching enzyme (GLC3).